The sequence spans 180 residues: Translation initiation factor IF-3 (180 aa).

The protein belongs to the IF-3 family. In terms of assembly, monomer.

The protein localises to the cytoplasm. Its function is as follows. IF-3 binds to the 30S ribosomal subunit and shifts the equilibrium between 70S ribosomes and their 50S and 30S subunits in favor of the free subunits, thus enhancing the availability of 30S subunits on which protein synthesis initiation begins. The protein is Translation initiation factor IF-3 of Salmonella paratyphi A (strain ATCC 9150 / SARB42).